The following is a 522-amino-acid chain: Occludin (522 aa).

The interval 1 to 20 is disordered; sequence MSSRPLESPPPYRPDEFKPN. The Cytoplasmic portion of the chain corresponds to 1–66; the sequence is MSSRPLESPP…KWTSPPGVIR (66 aa). In terms of domain architecture, MARVEL spans 60-269; that stretch reads SPPGVIRILS…IIFFAVKTRR (210 aa). Residues 67-89 traverse the membrane as a helical segment; the sequence is ILSMLIIVMCIAIFACVASTLAW. At 90–135 the chain is on the extracellular side; it reads DRGYGTSLLGGSVGYPYGGSGFGSYGSGYGYGYGYGYGYGGYTDPR. The helical transmembrane segment at 136-160 threads the bilayer; sequence AAKGFMLAMAAFCFIAALVIFVTSV. Over 161–170 the chain is Cytoplasmic; sequence IRSEMSRTRR. The chain crosses the membrane as a helical span at residues 171–195; the sequence is YYLSVIIVSAILGIMVFIATIVYIM. Over 196–243 the chain is Extracellular; it reads GVNPTAQSSGSLYGSQIYALCNQFYTPAATGLYVDQYLYHYCVVDPQE. Cys-216 and Cys-237 are disulfide-bonded. Residues 244-265 traverse the membrane as a helical segment; that stretch reads AIAIVLGFMIIVAFALIIFFAV. Topologically, residues 266 to 522 are cytoplasmic; it reads KTRRKMDRYD…MVGDYDRQKT (257 aa). The residue at position 302 (Ser-302) is a Phosphoserine. Thr-305 bears the Phosphothreonine mark. Ser-313, Ser-321, and Ser-340 each carry phosphoserine. The disordered stretch occupies residues 360-407; that stretch reads VDDFRQPRYSSGGNFETPSKRAPAKGRAGRSKRTEQDHYETDYTTGGE. The segment covering 367-376 has biased composition (polar residues); the sequence is RYSSGGNFET. Phosphotyrosine is present on Tyr-368. Residues Ser-369 and Ser-370 each carry the phosphoserine modification. Basic residues predominate over residues 381–390; the sequence is APAKGRAGRS. Basic and acidic residues predominate over residues 391–400; it reads KRTEQDHYET. Phosphotyrosine occurs at positions 398 and 402. A phosphothreonine; by PKC/PRKCH mark is found at Thr-403 and Thr-404. Position 408 is a phosphoserine (Ser-408). The OCEL domain maps to 414–522; that stretch reads EDWIREYPPI…MVGDYDRQKT (109 aa). The stretch at 426 to 489 forms a coiled coil; it reads DQQRQLYKRN…EYNRLKQVKG (64 aa). Ser-490 carries the phosphoserine modification.

This sequence belongs to the ELL/occludin family. As to quaternary structure, interacts with TJP1/ZO1. Interacts with VAPA. Interacts with CLDN1, CLDN6, CLDN9, CLDN11, CLDN12 and CLDN17. Interacts with PLSCR1. Interacts with LSR, ILDR1 and ILDR2. Interacts with TJP2/ZO2. In terms of processing, dephosphorylated by PTPRJ. The tyrosine phosphorylation on Tyr-398 and Tyr-402 reduces its ability to interact with TJP1. Phosphorylation at Ser-490 also attenuates the interaction with TJP1. Post-translationally, (Microbial infection) Cleaved by S.pyogenes SpeB protease; leading to its degradation. Degradation by SpeB promotes bacterial translocation across the host epithelial barrier. As to expression, localized at tight junctions of both epithelial and endothelial cells. Highly expressed in kidney. Not detected in testis.

The protein resides in the cell membrane. The protein localises to the cell junction. Its subcellular location is the tight junction. Functionally, may play a role in the formation and regulation of the tight junction (TJ) paracellular permeability barrier. It is able to induce adhesion when expressed in cells lacking tight junctions. In terms of biological role, (Microbial infection) Acts as a coreceptor for hepatitis C virus (HCV) in hepatocytes. In Homo sapiens (Human), this protein is Occludin (OCLN).